A 236-amino-acid chain; its full sequence is Biosynthetic peptidoglycan transglycosylase (236 aa).

Residues 12-31 form a helical membrane-spanning segment; it reads ALLWFAAGSALVVLVLRWVP.

Belongs to the glycosyltransferase 51 family.

The protein localises to the cell inner membrane. The catalysed reaction is [GlcNAc-(1-&gt;4)-Mur2Ac(oyl-L-Ala-gamma-D-Glu-L-Lys-D-Ala-D-Ala)](n)-di-trans,octa-cis-undecaprenyl diphosphate + beta-D-GlcNAc-(1-&gt;4)-Mur2Ac(oyl-L-Ala-gamma-D-Glu-L-Lys-D-Ala-D-Ala)-di-trans,octa-cis-undecaprenyl diphosphate = [GlcNAc-(1-&gt;4)-Mur2Ac(oyl-L-Ala-gamma-D-Glu-L-Lys-D-Ala-D-Ala)](n+1)-di-trans,octa-cis-undecaprenyl diphosphate + di-trans,octa-cis-undecaprenyl diphosphate + H(+). Its pathway is cell wall biogenesis; peptidoglycan biosynthesis. Functionally, peptidoglycan polymerase that catalyzes glycan chain elongation from lipid-linked precursors. The polypeptide is Biosynthetic peptidoglycan transglycosylase (Pseudomonas syringae pv. tomato (strain ATCC BAA-871 / DC3000)).